A 434-amino-acid chain; its full sequence is Probable phosphatidylinositol 3,4,5-trisphosphate 3-phosphatase TEP1 (434 aa).

One can recognise a Phosphatase tensin-type domain in the interval 33-255; sequence KTKNDIGLRL…RYHEFFITHE (223 aa). Cysteine 193 serves as the catalytic Phosphocysteine intermediate.

The catalysed reaction is a 1,2-diacyl-sn-glycero-3-phospho-(1D-myo-inositol-3,4,5-trisphosphate) + H2O = a 1,2-diacyl-sn-glycero-3-phospho-(1D-myo-inositol-4,5-bisphosphate) + phosphate. Its function is as follows. May act as a phosphoinositide 3-phosphatase by regulating PtdIns(3,4,5)P3 levels. This chain is Probable phosphatidylinositol 3,4,5-trisphosphate 3-phosphatase TEP1 (TEP1), found in Saccharomyces cerevisiae (strain ATCC 204508 / S288c) (Baker's yeast).